A 212-amino-acid polypeptide reads, in one-letter code: Ribosome maturation factor RimM (212 aa).

The 77-residue stretch at 105 to 181 (EEEFYYADLI…IDSITAGLDN (77 aa)) folds into the PRC barrel domain. The segment at 181–212 (NAELSGEEDEAEGPESARGSRPRGPKSAGEPR) is disordered.

This sequence belongs to the RimM family. As to quaternary structure, binds ribosomal protein uS19.

Its subcellular location is the cytoplasm. Functionally, an accessory protein needed during the final step in the assembly of 30S ribosomal subunit, possibly for assembly of the head region. Essential for efficient processing of 16S rRNA. May be needed both before and after RbfA during the maturation of 16S rRNA. It has affinity for free ribosomal 30S subunits but not for 70S ribosomes. In Chelativorans sp. (strain BNC1), this protein is Ribosome maturation factor RimM.